The primary structure comprises 225 residues: MKKILKNDWEPILGPEFEKPYYQNLRQFLKEEYSMRVIYPNANDIFNALHYTSYEDTKVVILGQDPYHGPNQAHGLSFSVQPGVRVPPSLQNMYKELKADIGCEIPNHGYLVKWAEQGVLLLNTVLTVRQGEANSHKGKGWEQFTDRVIELLNEREKPVIFILWGRHAQAKKKRITNPNHYIIESVHPSPLSASRGFFGSKPFSKVNRFLSSIGEKEIDWQIPNL.

Residue Asp-65 is the Proton acceptor of the active site.

This sequence belongs to the uracil-DNA glycosylase (UDG) superfamily. UNG family.

The protein localises to the cytoplasm. The catalysed reaction is Hydrolyzes single-stranded DNA or mismatched double-stranded DNA and polynucleotides, releasing free uracil.. Functionally, excises uracil residues from the DNA which can arise as a result of misincorporation of dUMP residues by DNA polymerase or due to deamination of cytosine. The sequence is that of Uracil-DNA glycosylase from Bacillus cytotoxicus (strain DSM 22905 / CIP 110041 / 391-98 / NVH 391-98).